A 111-amino-acid chain; its full sequence is Large ribosomal subunit protein uL22 (111 aa).

Belongs to the universal ribosomal protein uL22 family. As to quaternary structure, part of the 50S ribosomal subunit.

This protein binds specifically to 23S rRNA; its binding is stimulated by other ribosomal proteins, e.g. L4, L17, and L20. It is important during the early stages of 50S assembly. It makes multiple contacts with different domains of the 23S rRNA in the assembled 50S subunit and ribosome. Its function is as follows. The globular domain of the protein is located near the polypeptide exit tunnel on the outside of the subunit, while an extended beta-hairpin is found that lines the wall of the exit tunnel in the center of the 70S ribosome. In Xanthomonas euvesicatoria pv. vesicatoria (strain 85-10) (Xanthomonas campestris pv. vesicatoria), this protein is Large ribosomal subunit protein uL22.